The sequence spans 339 residues: Cyclin-Y-like protein 1 (339 aa).

Positions Gln-181–Asn-263 constitute a Cyclin N-terminal domain.

It belongs to the cyclin family. Cyclin Y subfamily.

It is found in the cell membrane. Key regulator of Wnt signaling implicated in various biological processes such as embryonic neurogenesis. In Danio rerio (Zebrafish), this protein is Cyclin-Y-like protein 1 (ccnyl1).